A 188-amino-acid polypeptide reads, in one-letter code: MRIGVLAMQGAFREHIQSLEALGVQGVEIRHANQLEGIAGLIIPGGESTTIGKLMVEFNLLEPVRHLAEGGLPVFGTCAGMVLLARDIIGSDQPRLGLMNARVQRNAFGRQVDSFEVDLEIPVLGEEPFHAVFIRAPYIEEIEPPAEALATFKDKIVMVRQGNLLATAFHPELTKDLRVHSYFLKMIG.

Position 46–48 (46–48) interacts with L-glutamine; sequence GES. Cys78 acts as the Nucleophile in catalysis. Residues Arg105 and 134–135 each bind L-glutamine; that span reads IR. Residues His170 and Glu172 each act as charge relay system in the active site.

The protein belongs to the glutaminase PdxT/SNO family. As to quaternary structure, in the presence of PdxS, forms a dodecamer of heterodimers. Only shows activity in the heterodimer.

The enzyme catalyses aldehydo-D-ribose 5-phosphate + D-glyceraldehyde 3-phosphate + L-glutamine = pyridoxal 5'-phosphate + L-glutamate + phosphate + 3 H2O + H(+). It carries out the reaction L-glutamine + H2O = L-glutamate + NH4(+). The protein operates within cofactor biosynthesis; pyridoxal 5'-phosphate biosynthesis. In terms of biological role, catalyzes the hydrolysis of glutamine to glutamate and ammonia as part of the biosynthesis of pyridoxal 5'-phosphate. The resulting ammonia molecule is channeled to the active site of PdxS. This is Pyridoxal 5'-phosphate synthase subunit PdxT from Moorella thermoacetica (strain ATCC 39073 / JCM 9320).